A 202-amino-acid polypeptide reads, in one-letter code: Protease (202 aa).

Active-site residues include H55, D72, and C122.

It belongs to the peptidase C5 family. In terms of assembly, interacts with protease cofactor pVI-C; this interaction is necessary for protease activation.

The protein resides in the virion. The protein localises to the host nucleus. It carries out the reaction Cleaves proteins of the adenovirus and its host cell at two consensus sites: -Yaa-Xaa-Gly-Gly-|-Xaa- and -Yaa-Xaa-Gly-Xaa-|-Gly- (in which Yaa is Met, Ile or Leu, and Xaa is any amino acid).. Requires DNA and protease cofactor for maximal activation. Inside nascent virions, becomes partially activated by binding to the viral DNA, allowing it to cleave the cofactor that binds to the protease and fully activates it. Actin, like the viral protease cofactor, seems to act as a cofactor in the cleavage of cytokeratin 18 and of actin itself. Cleaves viral precursor proteins (pTP, pIIIa, pVI, pVII, pVIII, and pX) inside newly assembled particles giving rise to mature virions. Protease complexed to its cofactor slides along the viral DNA to specifically locate and cleave the viral precursors. Mature virions have a weakened organization compared to the unmature virions, thereby facilitating subsequent uncoating. Without maturation, the particle lacks infectivity and is unable to uncoat. Late in adenovirus infection, in the cytoplasm, may participate in the cytoskeleton destruction. Cleaves host cell cytoskeletal keratins K7 and K18. The polypeptide is Protease (Bovine adenovirus 7 (BAdV-7)).